An 880-amino-acid polypeptide reads, in one-letter code: Alanine--tRNA ligase (880 aa).

The Zn(2+) site is built by His568, His572, Cys670, and His674.

Belongs to the class-II aminoacyl-tRNA synthetase family. The cofactor is Zn(2+).

It is found in the cytoplasm. It carries out the reaction tRNA(Ala) + L-alanine + ATP = L-alanyl-tRNA(Ala) + AMP + diphosphate. Catalyzes the attachment of alanine to tRNA(Ala) in a two-step reaction: alanine is first activated by ATP to form Ala-AMP and then transferred to the acceptor end of tRNA(Ala). Also edits incorrectly charged Ser-tRNA(Ala) and Gly-tRNA(Ala) via its editing domain. In Enterococcus faecalis (strain ATCC 700802 / V583), this protein is Alanine--tRNA ligase.